A 520-amino-acid chain; its full sequence is GMP synthase [glutamine-hydrolyzing] (520 aa).

A Glutamine amidotransferase type-1 domain is found at 12–205; that stretch reads KIIVLDYGSQ…AISICGGRGD (194 aa). The Nucleophile role is filled by C89. Catalysis depends on residues H179 and E181. Residues 206 to 395 enclose the GMPS ATP-PPase domain; the sequence is WSMDNFIDMQ…LGMPDEVVWR (190 aa). 233-239 contributes to the ATP binding site; it reads SGGVDSS.

Homodimer.

It catalyses the reaction XMP + L-glutamine + ATP + H2O = GMP + L-glutamate + AMP + diphosphate + 2 H(+). It participates in purine metabolism; GMP biosynthesis; GMP from XMP (L-Gln route): step 1/1. Functionally, catalyzes the synthesis of GMP from XMP. This chain is GMP synthase [glutamine-hydrolyzing], found in Streptococcus equi subsp. equi (strain 4047).